The following is a 178-amino-acid chain: MDLINLLFVSFWFILPAYTANAMACIFGGGKPVDLNKNFIDQKRLIGNGVTYRGTFFGVFFGIVTAIIQYLVSNLGFKFILSFNFTLIEYVIIGFLLSFGALFGDMFGSFLKRRLGFKQGQSAPVLDQITFIVFALIFVSYYYLVPSKISITLLILSPVVHILSNIIAYKLGLKKVWW.

A run of 5 helical transmembrane segments spans residues 7–27 (LFVSFWFILPAYTANAMACIF), 56–76 (FFGVFFGIVTAIIQYLVSNLG), 91–111 (VIIGFLLSFGALFGDMFGSFL), 125–145 (VLDQITFIVFALIFVSYYYLV), and 149–169 (ISITLLILSPVVHILSNIIAY).

This sequence belongs to the CDP-archaeol synthase family. It depends on Mg(2+) as a cofactor.

It localises to the cell membrane. It carries out the reaction 2,3-bis-O-(geranylgeranyl)-sn-glycerol 1-phosphate + CTP + H(+) = CDP-2,3-bis-O-(geranylgeranyl)-sn-glycerol + diphosphate. It functions in the pathway membrane lipid metabolism; glycerophospholipid metabolism. Its function is as follows. Catalyzes the formation of CDP-2,3-bis-(O-geranylgeranyl)-sn-glycerol (CDP-archaeol) from 2,3-bis-(O-geranylgeranyl)-sn-glycerol 1-phosphate (DGGGP) and CTP. This reaction is the third ether-bond-formation step in the biosynthesis of archaeal membrane lipids. This Methanococcus vannielii (strain ATCC 35089 / DSM 1224 / JCM 13029 / OCM 148 / SB) protein is CDP-archaeol synthase.